Reading from the N-terminus, the 493-residue chain is Cobyric acid synthase (493 aa).

Residues 252 to 443 (DLQITVVRLP…LHGLFDNGPW (192 aa)) enclose the GATase cobBQ-type domain. Cys-333 (nucleophile) is an active-site residue. The active site involves His-435.

Belongs to the CobB/CobQ family. CobQ subfamily.

The protein operates within cofactor biosynthesis; adenosylcobalamin biosynthesis. In terms of biological role, catalyzes amidations at positions B, D, E, and G on adenosylcobyrinic A,C-diamide. NH(2) groups are provided by glutamine, and one molecule of ATP is hydrogenolyzed for each amidation. In Nostoc sp. (strain PCC 7120 / SAG 25.82 / UTEX 2576), this protein is Cobyric acid synthase.